The sequence spans 1076 residues: Guanylyl cyclase C (1076 aa).

Residues 1–23 form the signal peptide; the sequence is MKSPLLGLVVWSLLLQLLQPGLA. The Extracellular segment spans residues 24 to 433; it reads FWNSQISQNC…PHDIPGLGPH (410 aa). N-linked (GlcNAc...) asparagine glycans are attached at residues asparagine 35, asparagine 82, asparagine 191, asparagine 198, asparagine 287, asparagine 306, asparagine 310, asparagine 348, and asparagine 405. Residues 434–457 traverse the membrane as a helical segment; sequence ILLIAVCTLAGVVVLILLIALLVL. The Cytoplasmic segment spans residues 458–1076; that stretch reads RKYKKDNELR…NTTDQDSTYF (619 aa). Residues 492-752 enclose the Protein kinase domain; sequence LKIDDDKKRD…KIENTLAKIF (261 aa). The Guanylate cyclase domain occupies 827–957; that stretch reads TVYFSDIVGF…DTVNTASRME (131 aa).

The protein belongs to the adenylyl cyclase class-4/guanylyl cyclase family. In terms of assembly, homotrimer. Interacts via its C-terminal region with NHERF4. Interacts with the lectin chaperone VIP36. Post-translationally, glycosylation at Asn-62 is required for interaction with VIP36 while glycosylation at Asn-348 and Asn-405 modulates ligand-mediated GC-C activation.

The protein localises to the cell membrane. Its subcellular location is the endoplasmic reticulum membrane. The catalysed reaction is GTP = 3',5'-cyclic GMP + diphosphate. Its function is as follows. Guanylyl cyclase that catalyzes synthesis of cyclic GMP (cGMP) from GTP. The chain is Guanylyl cyclase C (GUCY2C) from Cavia porcellus (Guinea pig).